A 292-amino-acid chain; its full sequence is Glycine--tRNA ligase alpha subunit (292 aa).

This sequence belongs to the class-II aminoacyl-tRNA synthetase family. Tetramer of two alpha and two beta subunits.

It is found in the cytoplasm. It catalyses the reaction tRNA(Gly) + glycine + ATP = glycyl-tRNA(Gly) + AMP + diphosphate. This is Glycine--tRNA ligase alpha subunit from Pelobacter propionicus (strain DSM 2379 / NBRC 103807 / OttBd1).